The following is a 157-amino-acid chain: MQIHLVFVGKTVFPDVETGIERYVSRLNHYLPTRIHYVKAEKIPPRGMESAVLEKECERILKLIGGKSNQLIVWDRTGKHLDSLEFARVLERLSNGGTGAVWMIIGGPLGISRELRDRANLVLALSEMTFPHDLARLIVAEQLYRAFTIIRGEPYHK.

Residues Gly106 and 125-130 contribute to the S-adenosyl-L-methionine site; that span reads LSEMTF.

It belongs to the RNA methyltransferase RlmH family. Homodimer.

It is found in the cytoplasm. It carries out the reaction pseudouridine(1915) in 23S rRNA + S-adenosyl-L-methionine = N(3)-methylpseudouridine(1915) in 23S rRNA + S-adenosyl-L-homocysteine + H(+). Specifically methylates the pseudouridine at position 1915 (m3Psi1915) in 23S rRNA. This is Ribosomal RNA large subunit methyltransferase H from Syntrophobacter fumaroxidans (strain DSM 10017 / MPOB).